Consider the following 175-residue polypeptide: Adenine phosphoribosyltransferase (175 aa).

Belongs to the purine/pyrimidine phosphoribosyltransferase family. As to quaternary structure, homodimer.

Its subcellular location is the cytoplasm. It carries out the reaction AMP + diphosphate = 5-phospho-alpha-D-ribose 1-diphosphate + adenine. It functions in the pathway purine metabolism; AMP biosynthesis via salvage pathway; AMP from adenine: step 1/1. Its function is as follows. Catalyzes a salvage reaction resulting in the formation of AMP, that is energically less costly than de novo synthesis. The chain is Adenine phosphoribosyltransferase from Pelagibacter ubique (strain HTCC1062).